Reading from the N-terminus, the 438-residue chain is Probable tRNA pseudouridine synthase D (438 aa).

The active-site Nucleophile is the D86. A TRUD domain is found at 165–390 (GVPNFFGIQR…SKGTRRELLL (226 aa)).

The protein belongs to the pseudouridine synthase TruD family.

The catalysed reaction is uridine(13) in tRNA = pseudouridine(13) in tRNA. Functionally, could be responsible for synthesis of pseudouridine from uracil-13 in transfer RNAs. This is Probable tRNA pseudouridine synthase D from Methanosarcina barkeri (strain Fusaro / DSM 804).